Consider the following 365-residue polypeptide: Chorismate synthase (365 aa).

Positions 48 and 54 each coordinate NADP(+). Residues 125–127 (RSS), 237–238 (NA), Gly277, 292–296 (KPTSS), and Arg318 each bind FMN.

The protein belongs to the chorismate synthase family. In terms of assembly, homotetramer. It depends on FMNH2 as a cofactor.

It carries out the reaction 5-O-(1-carboxyvinyl)-3-phosphoshikimate = chorismate + phosphate. It participates in metabolic intermediate biosynthesis; chorismate biosynthesis; chorismate from D-erythrose 4-phosphate and phosphoenolpyruvate: step 7/7. Catalyzes the anti-1,4-elimination of the C-3 phosphate and the C-6 proR hydrogen from 5-enolpyruvylshikimate-3-phosphate (EPSP) to yield chorismate, which is the branch point compound that serves as the starting substrate for the three terminal pathways of aromatic amino acid biosynthesis. This reaction introduces a second double bond into the aromatic ring system. In Verminephrobacter eiseniae (strain EF01-2), this protein is Chorismate synthase.